A 474-amino-acid polypeptide reads, in one-letter code: 3-isopropylmalate dehydratase large subunit (474 aa).

Residues cysteine 355, cysteine 415, and cysteine 418 each contribute to the [4Fe-4S] cluster site.

This sequence belongs to the aconitase/IPM isomerase family. LeuC type 1 subfamily. As to quaternary structure, heterodimer of LeuC and LeuD. [4Fe-4S] cluster is required as a cofactor.

The catalysed reaction is (2R,3S)-3-isopropylmalate = (2S)-2-isopropylmalate. It functions in the pathway amino-acid biosynthesis; L-leucine biosynthesis; L-leucine from 3-methyl-2-oxobutanoate: step 2/4. Catalyzes the isomerization between 2-isopropylmalate and 3-isopropylmalate, via the formation of 2-isopropylmaleate. In Shewanella sp. (strain MR-7), this protein is 3-isopropylmalate dehydratase large subunit.